We begin with the raw amino-acid sequence, 270 residues long: Glucosamine-6-phosphate deaminase (270 aa).

The active-site Proton acceptor; for enolization step is the Asp72. The active-site For ring-opening step is Asp141. The active-site Proton acceptor; for ring-opening step is His143. Glu148 serves as the catalytic For ring-opening step.

The protein belongs to the glucosamine/galactosamine-6-phosphate isomerase family. NagB subfamily. As to quaternary structure, homohexamer.

The enzyme catalyses alpha-D-glucosamine 6-phosphate + H2O = beta-D-fructose 6-phosphate + NH4(+). It participates in amino-sugar metabolism; N-acetylneuraminate degradation; D-fructose 6-phosphate from N-acetylneuraminate: step 5/5. Its activity is regulated as follows. Allosterically activated by N-acetylglucosamine 6-phosphate (GlcNAc6P). Functionally, catalyzes the reversible isomerization-deamination of glucosamine 6-phosphate (GlcN6P) to form fructose 6-phosphate (Fru6P) and ammonium ion. The polypeptide is Glucosamine-6-phosphate deaminase (Haemophilus influenzae (strain 86-028NP)).